The sequence spans 711 residues: T-box transcription factor TBX2 (711 aa).

Residues 109–287 (LEAKELWDQF…NNPFAKGFRD (179 aa)) constitute a DNA-binding region (T-box). Positions 313–449 (PERDGAESDA…GEGKEPSLAP (137 aa)) are disordered. Positions 326-340 (DPPPAREPPPSPSAA) are enriched in pro residues. Ser-336, Ser-342, and Ser-360 each carry phosphoserine. 3 stretches are compositionally biased toward basic and acidic residues: residues 363 to 372 (EPERTGEERS), 390 to 409 (TEPE…KEPT), and 421 to 444 (SLEK…EGKE). Positions 518–602 (GSGSSGGAGP…ATSAAAAAAA (85 aa)) are repression domain 1 (RD1). Ser-623, Ser-652, Ser-656, and Ser-675 each carry phosphoserine. The segment at 640 to 687 (TGLAAEGSKGGNSREPSPLPELALRKVGGPSRGALSPSGSAKEAASEL) is disordered.

Binds DNA as a monomer. Interacts with CHD4, HDAC1 and HDAC2, perhaps as components of a NuRD-like complex. Interacts with CBX3, HMGB2 and PBX1. Interacts with PML. Post-translationally, phosphorylated. May be phosphorylated by p38 MAPK in response to UV irradiation stress. In adults, highest levels in lung. Also found in heart, kidney, and ovary.

It is found in the nucleus. Functionally, transcription factor which acts as a transcriptional repressor. May also function as a transcriptional activator. Binds to the palindromic T site 5'-TTCACACCTAGGTGTGAA-3' DNA sequence, or a half-site, which are present in the regulatory region of several genes. Required for cardiac atrioventricular canal formation. May cooperate with NKX2.5 to negatively modulate expression of NPPA/ANF in the atrioventricular canal. May play a role as a positive regulator of TGFB2 expression, perhaps acting in concert with GATA4 in the developing outflow tract myocardium. Plays a role in limb pattern formation. Acts as a transcriptional repressor of ADAM10 gene expression, perhaps in concert with histone deacetylase HDAC1 as cofactor. Involved in branching morphogenesis in both developing lungs and adult mammary glands, via negative modulation of target genes; acting redundantly with TBX3. Required, together with TBX3, to maintain cell proliferation in the embryonic lung mesenchyme; perhaps acting downstream of SHH, BMP and TGFbeta signaling. Involved in modulating early inner ear development, acting independently of, and also redundantly with TBX3, in different subregions of the developing ear. Acts as a negative regulator of PML function in cellular senescence. Acts as a negative regulator of expression of CDKN1A/p21, IL33 and CCN4; repression of CDKN1A is enhanced in response to UV-induced stress, perhaps as a result of phosphorylation by p38 MAPK. Negatively modulates expression of CDKN2A/p19ARF and CDH1/E-cadherin. Plays a role in induction of the epithelial-mesenchymal transition (EMT). Plays a role in melanocyte proliferation, perhaps via regulation of cyclin CCND1. Involved in melanogenesis, acting via negative modulation of expression of DHICA oxidase/TYRP1 and P protein/OCA2. Involved in regulating retinal pigment epithelium (RPE) cell proliferation, perhaps via negatively modulating transcription of the transcription factor CEBPD. The protein is T-box transcription factor TBX2 (Tbx2) of Mus musculus (Mouse).